The sequence spans 159 residues: 2-C-methyl-D-erythritol 2,4-cyclodiphosphate synthase (159 aa).

Aspartate 10 and histidine 12 together coordinate a divalent metal cation. Residues 10–12 (DVH) and 37–38 (HS) contribute to the 4-CDP-2-C-methyl-D-erythritol 2-phosphate site. Residue histidine 45 coordinates a divalent metal cation. Residues 59 to 61 (DIG), 64 to 68 (FLDTD), 103 to 109 (AQAPKML), 135 to 138 (TTTE), phenylalanine 142, and arginine 145 contribute to the 4-CDP-2-C-methyl-D-erythritol 2-phosphate site.

Belongs to the IspF family. As to quaternary structure, homotrimer. Requires a divalent metal cation as cofactor.

It carries out the reaction 4-CDP-2-C-methyl-D-erythritol 2-phosphate = 2-C-methyl-D-erythritol 2,4-cyclic diphosphate + CMP. The protein operates within isoprenoid biosynthesis; isopentenyl diphosphate biosynthesis via DXP pathway; isopentenyl diphosphate from 1-deoxy-D-xylulose 5-phosphate: step 4/6. Its function is as follows. Involved in the biosynthesis of isopentenyl diphosphate (IPP) and dimethylallyl diphosphate (DMAPP), two major building blocks of isoprenoid compounds. Catalyzes the conversion of 4-diphosphocytidyl-2-C-methyl-D-erythritol 2-phosphate (CDP-ME2P) to 2-C-methyl-D-erythritol 2,4-cyclodiphosphate (ME-CPP) with a corresponding release of cytidine 5-monophosphate (CMP). The polypeptide is 2-C-methyl-D-erythritol 2,4-cyclodiphosphate synthase (Francisella tularensis subsp. holarctica (strain FTNF002-00 / FTA)).